A 271-amino-acid polypeptide reads, in one-letter code: Endonuclease V (271 aa).

Residues T46 to T67 form a disordered region. D76 and D140 together coordinate Mg(2+).

It belongs to the endonuclease V family. The cofactor is Mg(2+).

Its subcellular location is the cytoplasm. The catalysed reaction is Endonucleolytic cleavage at apurinic or apyrimidinic sites to products with a 5'-phosphate.. DNA repair enzyme involved in the repair of deaminated bases. Selectively cleaves double-stranded DNA at the second phosphodiester bond 3' to a deoxyinosine leaving behind the intact lesion on the nicked DNA. The chain is Endonuclease V from Haloarcula marismortui (strain ATCC 43049 / DSM 3752 / JCM 8966 / VKM B-1809) (Halobacterium marismortui).